Reading from the N-terminus, the 330-residue chain is Ferredoxin--NADP reductase (330 aa).

The FAD site is built by glutamate 35, glutamine 43, tyrosine 48, valine 90, phenylalanine 123, aspartate 285, and threonine 326.

This sequence belongs to the ferredoxin--NADP reductase type 2 family. In terms of assembly, homodimer. It depends on FAD as a cofactor.

The enzyme catalyses 2 reduced [2Fe-2S]-[ferredoxin] + NADP(+) + H(+) = 2 oxidized [2Fe-2S]-[ferredoxin] + NADPH. The protein is Ferredoxin--NADP reductase of Streptococcus agalactiae serotype Ia (strain ATCC 27591 / A909 / CDC SS700).